Consider the following 213-residue polypeptide: Orotate phosphoribosyltransferase (213 aa).

K26 is a binding site for 5-phospho-alpha-D-ribose 1-diphosphate. Orotate is bound at residue 34-35 (FF). 5-phospho-alpha-D-ribose 1-diphosphate is bound by residues 72-73 (YK), R98, K99, K102, and 123-131 (DDVISAGTS). Orotate contacts are provided by S127 and R155.

This sequence belongs to the purine/pyrimidine phosphoribosyltransferase family. PyrE subfamily. In terms of assembly, homodimer. Mg(2+) is required as a cofactor.

It catalyses the reaction orotidine 5'-phosphate + diphosphate = orotate + 5-phospho-alpha-D-ribose 1-diphosphate. It participates in pyrimidine metabolism; UMP biosynthesis via de novo pathway; UMP from orotate: step 1/2. In terms of biological role, catalyzes the transfer of a ribosyl phosphate group from 5-phosphoribose 1-diphosphate to orotate, leading to the formation of orotidine monophosphate (OMP). The protein is Orotate phosphoribosyltransferase of Neisseria gonorrhoeae (strain ATCC 700825 / FA 1090).